A 191-amino-acid chain; its full sequence is Probable protein-S-isoprenylcysteine O-methyltransferase (191 aa).

A run of 3 helical transmembrane segments spans residues tryptophan 8 to phenylalanine 28, tyrosine 45 to glutamate 65, and leucine 66 to isoleucine 86. S-adenosyl-L-methionine is bound by residues histidine 110 to isoleucine 113, tyrosine 118, and histidine 123 to tyrosine 126. The helical transmembrane segment at phenylalanine 129–phenylalanine 149 threads the bilayer. Arginine 160 serves as a coordination point for substrate. S-adenosyl-L-methionine is bound at residue glutamate 164.

The protein belongs to the class VI-like SAM-binding methyltransferase superfamily. Isoprenylcysteine carboxyl methyltransferase family. It depends on Zn(2+) as a cofactor.

It localises to the endoplasmic reticulum membrane. It catalyses the reaction [protein]-C-terminal S-[(2E,6E)-farnesyl]-L-cysteine + S-adenosyl-L-methionine = [protein]-C-terminal S-[(2E,6E)-farnesyl]-L-cysteine methyl ester + S-adenosyl-L-homocysteine. Catalyzes the post-translational methylation of isoprenylated C-terminal cysteine residues. Carboxyl methylation is a reversible and potentially regulated step in the post-translational modification of prenylated proteins. In Oryza sativa subsp. indica (Rice), this protein is Probable protein-S-isoprenylcysteine O-methyltransferase (ICMT).